We begin with the raw amino-acid sequence, 105 residues long: uncharacterized protein (105 aa).

Over 1–48 the chain is Extracellular; that stretch reads MAPKAFFVCLPWVLPRHALIVRQAGNPYHFLAYTNPRAPGKLQDSHCP. Residues 49–69 traverse the membrane as a helical segment; the sequence is VFFMGIIIITIITVTLAIIII. Residue Asn70 is a topological domain, cytoplasmic. Residues 71-91 form a helical membrane-spanning segment; the sequence is IIFLTLFDDGMCFYCSLLTFS. The Extracellular segment spans residues 92–105; that stretch reads FVSFNFDHFDHFDL.

It localises to the membrane. This is an uncharacterized protein from Saccharomyces cerevisiae (strain ATCC 204508 / S288c) (Baker's yeast).